Reading from the N-terminus, the 299-residue chain is NAD kinase (299 aa).

Asp75 serves as the catalytic Proton acceptor. NAD(+) is bound by residues 75 to 76 (DG), 149 to 150 (ND), Arg177, Asp179, 190 to 195 (TAYALS), Ala214, and Gln248.

Belongs to the NAD kinase family. A divalent metal cation serves as cofactor.

Its subcellular location is the cytoplasm. The catalysed reaction is NAD(+) + ATP = ADP + NADP(+) + H(+). Its function is as follows. Involved in the regulation of the intracellular balance of NAD and NADP, and is a key enzyme in the biosynthesis of NADP. Catalyzes specifically the phosphorylation on 2'-hydroxyl of the adenosine moiety of NAD to yield NADP. This chain is NAD kinase, found in Burkholderia thailandensis (strain ATCC 700388 / DSM 13276 / CCUG 48851 / CIP 106301 / E264).